Consider the following 130-residue polypeptide: MWKEFKEFAFKGNIIDLAVAVVIGGAFGAIVTSFVENIITPLMGVIVGGVDFTTLKVTVGEAEILYGNFIQSFVDFIIIAFSIFLAIKFLVKFKRQKEEEEVEAVVEELSKQEELLTEIRDLLKEQSNKN.

The next 2 helical transmembrane spans lie at 14–34 and 73–93; these read IIDL…VTSF and FVDF…LVKF.

It belongs to the MscL family. Homopentamer.

The protein resides in the cell membrane. Functionally, channel that opens in response to stretch forces in the membrane lipid bilayer. May participate in the regulation of osmotic pressure changes within the cell. This Oceanobacillus iheyensis (strain DSM 14371 / CIP 107618 / JCM 11309 / KCTC 3954 / HTE831) protein is Large-conductance mechanosensitive channel.